The primary structure comprises 343 residues: Mas-related G-protein coupled receptor member F (343 aa).

The Extracellular portion of the chain corresponds to 1–44 (MAGNCSWEAHSTNQNKMCPGMSEALELYSRGFLTIEQIATLPPP). Residue asparagine 4 is glycosylated (N-linked (GlcNAc...) asparagine). Residues 45–66 (AVTNYIFLLLCLCGLVGNGLVL) traverse the membrane as a helical segment. Residues 67-82 (WFFGFSIKRTPFSIYF) lie on the Cytoplasmic side of the membrane. Residues 83–104 (LHLASADGIYLFSKAVIALLNM) form a helical membrane-spanning segment. At 105 to 123 (GTFLGSFPDYVRRVSRIVG) the chain is on the extracellular side. The helical transmembrane segment at 124-144 (LCTFFAGVSLLPAISIERCVS) threads the bilayer. Over 145-160 (VIFPMWYWRRRPKRLS) the chain is Cytoplasmic. A helical membrane pass occupies residues 161-181 (AGVCALLWLLSFLVTSIHNYF). The Extracellular segment spans residues 182-198 (CMFLGHEASGTACLNMD). Residues 199-220 (ISLGILLFFLFCPLMVLPCLAL) traverse the membrane as a helical segment. Residues 221–241 (ILHVECRARRRQRSAKLNHVV) are Cytoplasmic-facing. The helical transmembrane segment at 242 to 263 (LAIVSVFLVSSIYLGIDWFLFW) threads the bilayer. The Extracellular segment spans residues 264–273 (VFQIPAPFPE). Residues 274–294 (YVTDLCICINSSAKPIVYFLA) traverse the membrane as a helical segment. Topologically, residues 295 to 343 (GRDKSQRLWEPLRVVFQRALRDGAEPGDAASSTPNTVTMEMQCPSGNAS) are cytoplasmic. Positions 318–343 (AEPGDAASSTPNTVTMEMQCPSGNAS) are disordered. A compositionally biased stretch (polar residues) spans 324 to 343 (ASSTPNTVTMEMQCPSGNAS).

It belongs to the G-protein coupled receptor 1 family. Mas subfamily. Gut, vas deferens, uterus and aorta; barely detectable in liver, kidney, lung, and salivary gland. In the brain, markedly abundant in the cerebellum.

The protein localises to the cell membrane. In terms of biological role, orphan receptor. May bind to a neuropeptide and may regulate nociceptor function and/or development, including the sensation or modulation of pain. This chain is Mas-related G-protein coupled receptor member F (Mrgprf), found in Rattus norvegicus (Rat).